Here is a 542-residue protein sequence, read N- to C-terminus: Multidrug transporter DTR1 (542 aa).

Residues Asn6 and Asn46 are each glycosylated (N-linked (GlcNAc...) asparagine). A helical transmembrane segment spans residues 80-100; that stretch reads LIFLIVIYNGFLGPLAGNVFI. Residues Asn111 and Asn118 are each glycosylated (N-linked (GlcNAc...) asparagine). A run of 5 helical transmembrane segments spans residues 119–139, 146–166, 169–189, 210–230, and 237–257; these read ATVS…GALA, ILYI…ASVP, IGSL…VISL, FMLG…LILL, and WLFG…ILLL. Residue Asn274 is glycosylated (N-linked (GlcNAc...) asparagine). The next 4 membrane-spanning stretches (helical) occupy residues 332-352, 374-394, 419-439, and 441-461; these read IMTF…FCTY, IGAC…IGGH, ILTV…GWCI, and FHYH…GLTW. Residue Asn463 is glycosylated (N-linked (GlcNAc...) asparagine). A run of 2 helical transmembrane segments spans residues 481 to 501 and 511 to 531; these read AIAV…ALIA and FCFL…LVLI.

It belongs to the major facilitator superfamily. CAR1 family.

The protein resides in the cell membrane. In terms of biological role, plasma membrane acetic acid exporter, relieving the stress induced upon cells within hemocytes, and thus enabling increased proliferation and virulence against Galleria mellonella larvae. Confers resistance to weak acid and oxidative stress, but not to antifungal drugs. The chain is Multidrug transporter DTR1 from Candida glabrata (strain ATCC 2001 / BCRC 20586 / JCM 3761 / NBRC 0622 / NRRL Y-65 / CBS 138) (Yeast).